The primary structure comprises 371 residues: Terpene cyclase 6 (371 aa).

Mg(2+) contacts are provided by Asp144, Asn266, Ser270, and Glu274. The D(D/E)XX(D/E) motif motif lies at 144–148 (DDVME). The short motif at 266 to 274 (NDLYSYDKE) is the NSE motif element. The WxxxxxRY motif signature appears at 352-359 (HHATLGRY). (2E,6E)-farnesyl diphosphate-binding residues include Arg358 and Tyr359.

Belongs to the terpene synthase family. In terms of assembly, homodimer. The cofactor is Mg(2+).

It catalyses the reaction (2E,6E)-farnesyl diphosphate + H2O = (-)-alpha-acorenol + diphosphate. It participates in sesquiterpene biosynthesis. Functionally, terpene cyclase that catalyzes the cyclization of farnesyl diphosphate (FPP) to the spirocyclic sesquiterpene alpha-acorenol. The polypeptide is Terpene cyclase 6 (Gibberella fujikuroi (strain CBS 195.34 / IMI 58289 / NRRL A-6831) (Bakanae and foot rot disease fungus)).